The primary structure comprises 1025 residues: Multidrug resistance protein MdtC (1025 aa).

The next 12 membrane-spanning stretches (helical) occupy residues 15-35, 333-353, 360-380, 387-407, 431-451, 469-489, 528-548, 851-871, 875-895, 897-917, 953-973, and 984-1004; these read ILISLAITLCGILGFRLLPVA, EVEQTLVISVALVILVVFLFL, LIPAVAVPVSLIGTFAAMYLC, LSLMALTIATGFVVDDAIVVL, VGFTVLSMSLSLVAVFLPLLL, VAIGISLAVSLTLTPMMCGWL, LTGLVVLGTIALSVWLYISIP, AQVILILAAIATVYIVLGMLY, VHPLTILSTLPSAGVGALLAL, IFDAPFSLIALIGIMLLIGIV, PIMMTTLAALFGALPLVLSGG, and ITIVGGLVMSQLLTLYTTPVV.

Belongs to the resistance-nodulation-cell division (RND) (TC 2.A.6) family. MdtC subfamily. In terms of assembly, part of a tripartite efflux system composed of MdtA, MdtB and MdtC. MdtC forms a heteromultimer with MdtB.

It localises to the cell inner membrane. This chain is Multidrug resistance protein MdtC, found in Klebsiella pneumoniae (strain 342).